The chain runs to 100 residues: MIPLSWYMALATVLFCIGVAGFLTRRNIIVMLLSLELMLNGVNLNLVAMSYFMDSLRGHVFTLFVITVAACEAAVGLGIVICLFRSRRTVRNDNIVELRG.

3 helical membrane-spanning segments follow: residues 2–22, 28–48, and 64–84; these read IPLS…VAGF, IIVM…NLVA, and FVIT…ICLF.

This sequence belongs to the complex I subunit 4L family. NDH-1 is composed of 14 different subunits. Subunits NuoA, H, J, K, L, M, N constitute the membrane sector of the complex.

It is found in the cell inner membrane. It catalyses the reaction a quinone + NADH + 5 H(+)(in) = a quinol + NAD(+) + 4 H(+)(out). Its function is as follows. NDH-1 shuttles electrons from NADH, via FMN and iron-sulfur (Fe-S) centers, to quinones in the respiratory chain. The immediate electron acceptor for the enzyme in this species is believed to be ubiquinone. Couples the redox reaction to proton translocation (for every two electrons transferred, four hydrogen ions are translocated across the cytoplasmic membrane), and thus conserves the redox energy in a proton gradient. The protein is NADH-quinone oxidoreductase subunit K of Desulfovibrio desulfuricans (strain ATCC 27774 / DSM 6949 / MB).